Consider the following 318-residue polypeptide: NAD(P)H-dependent D-xylose reductase (318 aa).

Catalysis depends on Y48, which acts as the Proton donor. H110 contacts substrate. NAD(+) contacts are provided by residues 165–166 (SN), 214–223 (SNFGPLSFLE), and 270–280 (KSTFPNTLAVN).

It belongs to the aldo/keto reductase family.

The catalysed reaction is xylitol + NAD(+) = D-xylose + NADH + H(+). It carries out the reaction xylitol + NADP(+) = D-xylose + NADPH + H(+). The protein operates within carbohydrate metabolism; D-xylose degradation. Functionally, reduces D-xylose into xylitol. Has a preference for NADPH, but can also utilize NADH as cosubstrate. The protein is NAD(P)H-dependent D-xylose reductase (XYL1) of Pachysolen tannophilus (Yeast).